We begin with the raw amino-acid sequence, 216 residues long: Lipoprotein-releasing system ATP-binding protein LolD (216 aa).

The region spanning 2–216 is the ABC transporter domain; sequence IHLEGITKSF…TIHMVDGNII (215 aa). 34–41 serves as a coordination point for ATP; sequence GPSGAGKT.

The protein belongs to the ABC transporter superfamily. Lipoprotein translocase (TC 3.A.1.125) family. In terms of assembly, the complex is composed of two ATP-binding proteins (LolD) and two transmembrane proteins (LolC and LolE).

Its subcellular location is the cell inner membrane. In terms of biological role, part of the ABC transporter complex LolCDE involved in the translocation of mature outer membrane-directed lipoproteins, from the inner membrane to the periplasmic chaperone, LolA. Responsible for the formation of the LolA-lipoprotein complex in an ATP-dependent manner. This is Lipoprotein-releasing system ATP-binding protein LolD from Bacteroides fragilis (strain YCH46).